The following is a 339-amino-acid chain: Phenylalanine--tRNA ligase alpha subunit (339 aa).

Residue Glu-250 coordinates Mg(2+).

The protein belongs to the class-II aminoacyl-tRNA synthetase family. Phe-tRNA synthetase alpha subunit type 1 subfamily. As to quaternary structure, tetramer of two alpha and two beta subunits. Requires Mg(2+) as cofactor.

It is found in the cytoplasm. The catalysed reaction is tRNA(Phe) + L-phenylalanine + ATP = L-phenylalanyl-tRNA(Phe) + AMP + diphosphate + H(+). This chain is Phenylalanine--tRNA ligase alpha subunit, found in Bacteroides fragilis (strain ATCC 25285 / DSM 2151 / CCUG 4856 / JCM 11019 / LMG 10263 / NCTC 9343 / Onslow / VPI 2553 / EN-2).